A 161-amino-acid polypeptide reads, in one-letter code: Alpha-crystallin A chain (161 aa).

The residue at position 1 (Met-1) is an N-acetylmethionine. Positions 1–53 are required for complex formation with BFSP1 and BFSP2; the sequence is MDVTIQHPWFKRALGPFYHNRLFDQFFGEGLFEYDLLPFQSLFRTVLDSGISE. Deamidated glutamine; partial occurs at positions 6 and 40. Residues 41 to 150 form the sHSP domain; that stretch reads SLFRTVLDSG…SHSERAIPVS (110 aa). Lys-87 carries the N6-acetyllysine modification. His-88 is a Zn(2+) binding site. Asn-89 bears the Deamidated asparagine; partial mark. Residues Glu-90 and His-95 each contribute to the Zn(2+) site. Ser-110 carries the phosphoserine modification. Asn-111 bears the Deamidated asparagine; partial mark. Cys-119 and Cys-130 are oxidised to a cystine. Gln-135 bears the Deamidated glutamine; partial mark. Positions 135 to 161 are disordered; sequence QSGMDASHSERAIPVSREEKASSAPNS. Basic and acidic residues predominate over residues 141–155; it reads SHSERAIPVSREEKA. Position 142 (His-142) interacts with Zn(2+). Ser-150 is a glycosylation site (O-linked (GlcNAc) serine).

The protein belongs to the small heat shock protein (HSP20) family. In terms of assembly, heteromer composed of three CRYAA and one CRYAB subunits. Inter-subunit bridging via zinc ions enhances stability, which is crucial as there is no protein turn over in the lens. Can also form homodimers and homotetramers (dimers of dimers) which serve as the building blocks of homooligomers. Within homooligomers, the zinc-binding motif is created from residues of 3 different molecules. His-88 and Glu-90 from one molecule are ligands of the zinc ion, and His-95 and His-142 residues from additional molecules complete the site with tetrahedral coordination geometry. Part of a complex required for lens intermediate filament formation composed of BFSP1, BFSP2 and CRYAA. Undergoes age-dependent proteolytical cleavage at the C-terminus.

It is found in the cytoplasm. It localises to the nucleus. Functionally, contributes to the transparency and refractive index of the lens. In its oxidized form (absence of intramolecular disulfide bond), acts as a chaperone, preventing aggregation of various proteins under a wide range of stress conditions. Required for the correct formation of lens intermediate filaments as part of a complex composed of BFSP1, BFSP2 and CRYAA. This is Alpha-crystallin A chain (CRYAA) from Trichechus inunguis (Amazon manatee).